The chain runs to 245 residues: Terpene cyclase prhH (245 aa).

7 helical membrane-spanning segments follow: residues 17-37 (ILAISEVLKVVAAVGWSVNYI), 51-71 (IGILPLCCDIGWEFVYAWMFP), 76-96 (HWQGVVRVWFFLHSAVLLVTL), 113-133 (IVFIYIFVTLVFGAGQYALAA), 138-158 (ALGFHWGGALCQFLSSSCGIA), 170-190 (SYLIWFARAISTFAGFIKLCI), and 205-225 (PMCWFYIVTVLSFDAAYPFLY).

The protein belongs to the paxB family.

The protein localises to the membrane. Its pathway is secondary metabolite biosynthesis; terpenoid biosynthesis. Functionally, terpene cyclase; part of the gene cluster that mediates the biosynthesis of paraherquonin, a meroterpenoid with a unique, highly congested hexacyclic molecular architecture. The first step of the pathway is the synthesis of 3,5-dimethylorsellinic acid (DMOA) by the polyketide synthase prhL. Synthesis of DMOA is followed by farnesylation by the prenyltransferase prhE, methylesterification by the methyl-transferase prhM, epoxidation of the prenyl chain by the flavin-dependent monooxygenase prhF, and cyclization of the farnesyl moiety by the terpene cyclase prhH, to yield the tetracyclic intermediate, protoaustinoid A. The short chain dehydrogenase prhI then oxidizes the C-3 alcohol group of the terpene cyclase product to transform protoaustinoid A into protoaustinoid B. The FAD-binding monooxygenase prhJ catalyzes the oxidation of protoaustinoid B into preaustinoid A which is further oxidized into preaustinoid A1 by FAD-binding monooxygenase phrK. Finally, prhA leads to berkeleydione via the berkeleyone B intermediate. PrhA is a multifunctional dioxygenase that first desaturates at C5-C6 to form berkeleyone B, followed by rearrangement of the A/B-ring to form the cycloheptadiene moiety in berkeleydione. Berkeleydione serves as the key intermediate for the biosynthesis of paraherquonin as well as many other meroterpenoids. The cytochrome P450 monooxygenases prhB, prhD, and prhN, as well as the isomerase prhC, are probably involved in the late stage of paraherquonin biosynthesis, after the production of berkeleydione. Especially prhC might be a multifunctional enzyme that catalyzes the D-ring expansion via intramolecular methoxy rearrangement, as well as the hydrolysis of the expanded D-ring. The polypeptide is Terpene cyclase prhH (Penicillium brasilianum).